The primary structure comprises 183 residues: Transmembrane protein 252 (183 aa).

Helical transmembrane passes span 8–28 (ILCA…GFFI) and 39–59 (LVVA…GIFW).

Its subcellular location is the membrane. In Mus musculus (Mouse), this protein is Transmembrane protein 252 (Tmem252).